The primary structure comprises 293 residues: Protease HtpX homolog (293 aa).

The next 2 membrane-spanning stretches (helical) occupy residues 5–25 and 43–63; these read IFLF…TLRL and ALLV…LAMS. His-148 provides a ligand contact to Zn(2+). Glu-149 is a catalytic residue. His-152 serves as a coordination point for Zn(2+). Transmembrane regions (helical) follow at residues 159 to 179 and 199 to 219; these read VTLA…SRII and FVTS…IVMW. Glu-225 is a binding site for Zn(2+).

This sequence belongs to the peptidase M48B family. Zn(2+) is required as a cofactor.

Its subcellular location is the cell inner membrane. This chain is Protease HtpX homolog, found in Nitrosomonas europaea (strain ATCC 19718 / CIP 103999 / KCTC 2705 / NBRC 14298).